We begin with the raw amino-acid sequence, 447 residues long: Argininosuccinate synthase (447 aa).

ATP is bound by residues 17 to 25 and Ala-43; that span reads AFSGGLDTS. Tyr-99 lines the L-citrulline pocket. Residues Gly-129 and Thr-131 each coordinate ATP. Residues Thr-131, Asn-135, and Asp-136 each coordinate L-aspartate. Asn-135 is an L-citrulline binding site. Residue Asp-136 coordinates ATP. Residues Arg-139 and Ser-192 each coordinate L-citrulline. Residue Asp-194 participates in ATP binding. L-citrulline contacts are provided by Thr-201, Glu-203, and Glu-280.

This sequence belongs to the argininosuccinate synthase family. Type 2 subfamily. As to quaternary structure, homotetramer.

Its subcellular location is the cytoplasm. The enzyme catalyses L-citrulline + L-aspartate + ATP = 2-(N(omega)-L-arginino)succinate + AMP + diphosphate + H(+). It participates in amino-acid biosynthesis; L-arginine biosynthesis; L-arginine from L-ornithine and carbamoyl phosphate: step 2/3. The polypeptide is Argininosuccinate synthase (Shigella boydii serotype 18 (strain CDC 3083-94 / BS512)).